Here is a 447-residue protein sequence, read N- to C-terminus: uncharacterized protein (447 aa).

[4Fe-4S] cluster-binding residues include cysteine 87, cysteine 93, cysteine 96, and cysteine 162. S-adenosyl-L-methionine is bound by residues glutamine 284, tyrosine 313, glutamate 334, and aspartate 375. Cysteine 402 (nucleophile) is an active-site residue.

Belongs to the class I-like SAM-binding methyltransferase superfamily. RNA M5U methyltransferase family.

This is an uncharacterized protein from Nanoarchaeum equitans (strain Kin4-M).